Consider the following 266-residue polypeptide: Undecaprenyl-diphosphatase (266 aa).

The next 8 helical transmembrane spans lie at M3–V23, G41–Y61, V86–A106, L108–I128, F149–M171, A184–W204, I220–V240, and F245–A265.

Belongs to the UppP family.

It is found in the cell inner membrane. The catalysed reaction is di-trans,octa-cis-undecaprenyl diphosphate + H2O = di-trans,octa-cis-undecaprenyl phosphate + phosphate + H(+). In terms of biological role, catalyzes the dephosphorylation of undecaprenyl diphosphate (UPP). Confers resistance to bacitracin. The protein is Undecaprenyl-diphosphatase of Rhizorhabdus wittichii (strain DSM 6014 / CCUG 31198 / JCM 15750 / NBRC 105917 / EY 4224 / RW1) (Sphingomonas wittichii).